The primary structure comprises 157 residues: Protein Smg homolog (157 aa).

The protein belongs to the Smg family.

This Aliivibrio fischeri (strain ATCC 700601 / ES114) (Vibrio fischeri) protein is Protein Smg homolog.